The primary structure comprises 334 residues: UDP-N-acetylglucosamine--N-acetylmuramyl-(pentapeptide) pyrophosphoryl-undecaprenol N-acetylglucosamine transferase (334 aa).

UDP-N-acetyl-alpha-D-glucosamine is bound by residues 11–13 (TGG), Asn-125, Ser-185, Ile-229, and Gln-274.

The protein belongs to the glycosyltransferase 28 family. MurG subfamily.

The protein localises to the cell inner membrane. The enzyme catalyses di-trans,octa-cis-undecaprenyl diphospho-N-acetyl-alpha-D-muramoyl-L-alanyl-D-glutamyl-meso-2,6-diaminopimeloyl-D-alanyl-D-alanine + UDP-N-acetyl-alpha-D-glucosamine = di-trans,octa-cis-undecaprenyl diphospho-[N-acetyl-alpha-D-glucosaminyl-(1-&gt;4)]-N-acetyl-alpha-D-muramoyl-L-alanyl-D-glutamyl-meso-2,6-diaminopimeloyl-D-alanyl-D-alanine + UDP + H(+). The protein operates within cell wall biogenesis; peptidoglycan biosynthesis. In terms of biological role, cell wall formation. Catalyzes the transfer of a GlcNAc subunit on undecaprenyl-pyrophosphoryl-MurNAc-pentapeptide (lipid intermediate I) to form undecaprenyl-pyrophosphoryl-MurNAc-(pentapeptide)GlcNAc (lipid intermediate II). This Thermosipho melanesiensis (strain DSM 12029 / CIP 104789 / BI429) protein is UDP-N-acetylglucosamine--N-acetylmuramyl-(pentapeptide) pyrophosphoryl-undecaprenol N-acetylglucosamine transferase.